A 352-amino-acid polypeptide reads, in one-letter code: MIETDKLRAAAPERLISPQPADRQEDAVERALRPKRLAEYVGQAKIREQLEIFIHAAKKRSEALDHVLLFGPPGLGKTTLAHIVAAEMGVNLRQTSGPVLERAGDLAALLTNLEPHDVLFIDEIHRLSPVVEEILYPALEDFQIDIMIGEGPAARSVKLDLPPFTLVGATTRAGMLTNPLRDRFGIVSRLEFYTPDELGFIVSRSARLLNVEIDDDGALEIARRARGTPRIANRLLRRVRDYAEVKAGGHITRAVADAALRMLDVDSLGLDLMDRKMLSAMLEKFGGGPVGLDNLAAAIGESTDTIEDVIEPYLIQQGYLQRTPRGRMATHSIWQHFGLAPPRPGGTDLFGG.

Residues 1–26 (MIETDKLRAAAPERLISPQPADRQED) form a disordered region. The tract at residues 4–193 (TDKLRAAAPE…FGIVSRLEFY (190 aa)) is large ATPase domain (RuvB-L). ATP is bound by residues L32, R33, G74, K77, T78, T79, 140 to 142 (EDF), R183, Y193, and R230. Residue T78 participates in Mg(2+) binding. Residues 194-264 (TPDELGFIVS…VADAALRMLD (71 aa)) form a small ATPAse domain (RuvB-S) region. The head domain (RuvB-H) stretch occupies residues 267-352 (SLGLDLMDRK…RPGGTDLFGG (86 aa)). Residues R322 and R327 each coordinate DNA.

Belongs to the RuvB family. In terms of assembly, homohexamer. Forms an RuvA(8)-RuvB(12)-Holliday junction (HJ) complex. HJ DNA is sandwiched between 2 RuvA tetramers; dsDNA enters through RuvA and exits via RuvB. An RuvB hexamer assembles on each DNA strand where it exits the tetramer. Each RuvB hexamer is contacted by two RuvA subunits (via domain III) on 2 adjacent RuvB subunits; this complex drives branch migration. In the full resolvosome a probable DNA-RuvA(4)-RuvB(12)-RuvC(2) complex forms which resolves the HJ.

The protein resides in the cytoplasm. It carries out the reaction ATP + H2O = ADP + phosphate + H(+). The RuvA-RuvB-RuvC complex processes Holliday junction (HJ) DNA during genetic recombination and DNA repair, while the RuvA-RuvB complex plays an important role in the rescue of blocked DNA replication forks via replication fork reversal (RFR). RuvA specifically binds to HJ cruciform DNA, conferring on it an open structure. The RuvB hexamer acts as an ATP-dependent pump, pulling dsDNA into and through the RuvAB complex. RuvB forms 2 homohexamers on either side of HJ DNA bound by 1 or 2 RuvA tetramers; 4 subunits per hexamer contact DNA at a time. Coordinated motions by a converter formed by DNA-disengaged RuvB subunits stimulates ATP hydrolysis and nucleotide exchange. Immobilization of the converter enables RuvB to convert the ATP-contained energy into a lever motion, pulling 2 nucleotides of DNA out of the RuvA tetramer per ATP hydrolyzed, thus driving DNA branch migration. The RuvB motors rotate together with the DNA substrate, which together with the progressing nucleotide cycle form the mechanistic basis for DNA recombination by continuous HJ branch migration. Branch migration allows RuvC to scan DNA until it finds its consensus sequence, where it cleaves and resolves cruciform DNA. The protein is Holliday junction branch migration complex subunit RuvB of Azoarcus sp. (strain BH72).